The sequence spans 447 residues: Asparagine--tRNA ligase (447 aa).

This sequence belongs to the class-II aminoacyl-tRNA synthetase family. Homodimer.

The protein localises to the cytoplasm. It catalyses the reaction tRNA(Asn) + L-asparagine + ATP = L-asparaginyl-tRNA(Asn) + AMP + diphosphate + H(+). This Lactococcus lactis subsp. cremoris (strain MG1363) protein is Asparagine--tRNA ligase.